A 181-amino-acid chain; its full sequence is Trafficking protein particle complex subunit 3 homolog (181 aa).

Cys70 carries S-palmitoyl cysteine lipidation.

This sequence belongs to the TRAPP small subunits family. BET3 subfamily. As to quaternary structure, homodimer. Part of the multisubunit TRAPP (transport protein particle) complex.

It localises to the golgi apparatus. The protein resides in the cis-Golgi network. Its subcellular location is the endoplasmic reticulum. Its function is as follows. May play a role in vesicular transport from endoplasmic reticulum to Golgi. Required for the systemic spread of the RNAi response. In Caenorhabditis elegans, this protein is Trafficking protein particle complex subunit 3 homolog (trpp-3).